The following is a 275-amino-acid chain: Large ribosomal subunit protein uL2 (275 aa).

The span at 35-49 shows a compositional bias: polar residues; that stretch reads DSQSSTAGRNNNGRI. Disordered regions lie at residues 35–59 and 224–275; these read DSQSSTAGRNNNGRITTRHKGGGHK and AMNP…RHKR. Positions 50–59 are enriched in basic residues; that stretch reads TTRHKGGGHK.

The protein belongs to the universal ribosomal protein uL2 family. Part of the 50S ribosomal subunit. Forms a bridge to the 30S subunit in the 70S ribosome.

Functionally, one of the primary rRNA binding proteins. Required for association of the 30S and 50S subunits to form the 70S ribosome, for tRNA binding and peptide bond formation. It has been suggested to have peptidyltransferase activity; this is somewhat controversial. Makes several contacts with the 16S rRNA in the 70S ribosome. This is Large ribosomal subunit protein uL2 from Burkholderia cenocepacia (strain HI2424).